The sequence spans 168 residues: Plastocyanin, chloroplastic (168 aa).

The N-terminal 69 residues, 1–69 (MATVTSTTVA…SAVLASNALA (69 aa)), are a transit peptide targeting the chloroplast. Residues 70–168 (VEVLLGASDG…AGMVGQVTVN (99 aa)) enclose the Plastocyanin-like domain. Residues His106, Cys153, His156, and Met161 each contribute to the Cu cation site.

The protein belongs to the plastocyanin family. Requires Cu(2+) as cofactor.

It is found in the plastid. The protein resides in the chloroplast thylakoid membrane. Its function is as follows. Participates in electron transfer between P700 and the cytochrome b6-f complex in photosystem I. The chain is Plastocyanin, chloroplastic (PETE) from Pisum sativum (Garden pea).